We begin with the raw amino-acid sequence, 230 residues long: MNENVIALDGPAGSGKSTVARQIAERIGFNYLDTGAFYRALTLYLFRLHGNSPNTESFADWVKTSEAERSLSDIRILCEFSAGKENRIFLNGEEVSLAIRTPEITREIKHIANRRIYRNFVNQELHSLAKLHKLIIDGRDIGTEVFPDAKFKFYLTASSKVRAERRFLQLQEQGIEADRDEIEKEIILRDKSDMEREIAPLYQANDAILIDTDILSKNSVISKILKILDR.

An ATP-binding site is contributed by 10–18 (GPAGSGKST).

This sequence belongs to the cytidylate kinase family. Type 1 subfamily.

It is found in the cytoplasm. It carries out the reaction CMP + ATP = CDP + ADP. The catalysed reaction is dCMP + ATP = dCDP + ADP. In Leptospira borgpetersenii serovar Hardjo-bovis (strain JB197), this protein is Cytidylate kinase.